Reading from the N-terminus, the 281-residue chain is Phosphatidylglycerol--prolipoprotein diacylglyceryl transferase (281 aa).

The next 4 membrane-spanning stretches (helical) occupy residues 29–49, 64–84, 100–120, and 124–144; these read FYSL…GKMI, LFFY…VLFY, GGMS…FVSW, and LNWL…MFLG. R145 is a binding site for a 1,2-diacyl-sn-glycero-3-phospho-(1'-sn-glycerol). 3 helical membrane passes run 180–200, 209–229, and 248–268; these read QLYQ…LLFW, GVLV…NEFF, and GQWL…YALT.

This sequence belongs to the Lgt family.

The protein localises to the cell inner membrane. It carries out the reaction L-cysteinyl-[prolipoprotein] + a 1,2-diacyl-sn-glycero-3-phospho-(1'-sn-glycerol) = an S-1,2-diacyl-sn-glyceryl-L-cysteinyl-[prolipoprotein] + sn-glycerol 1-phosphate + H(+). The protein operates within protein modification; lipoprotein biosynthesis (diacylglyceryl transfer). Catalyzes the transfer of the diacylglyceryl group from phosphatidylglycerol to the sulfhydryl group of the N-terminal cysteine of a prolipoprotein, the first step in the formation of mature lipoproteins. In Erythrobacter litoralis (strain HTCC2594), this protein is Phosphatidylglycerol--prolipoprotein diacylglyceryl transferase.